The sequence spans 535 residues: Phosphoenolpyruvate carboxykinase (ATP) (535 aa).

Substrate-binding residues include R59, Y201, and K207. Residues K207, H226, and 243-251 contribute to the ATP site; that span reads GLSGTGKTT. The Mn(2+) site is built by K207 and H226. Mn(2+) is bound at residue D264. ATP is bound by residues E292, R328, 444–445, and T450; that span reads RI. R328 contributes to the substrate binding site.

Belongs to the phosphoenolpyruvate carboxykinase (ATP) family. Mn(2+) serves as cofactor.

It localises to the cytoplasm. The enzyme catalyses oxaloacetate + ATP = phosphoenolpyruvate + ADP + CO2. It participates in carbohydrate biosynthesis; gluconeogenesis. Functionally, involved in the gluconeogenesis. Catalyzes the conversion of oxaloacetate (OAA) to phosphoenolpyruvate (PEP) through direct phosphoryl transfer between the nucleoside triphosphate and OAA. This Parabacteroides distasonis (strain ATCC 8503 / DSM 20701 / CIP 104284 / JCM 5825 / NCTC 11152) protein is Phosphoenolpyruvate carboxykinase (ATP).